Consider the following 453-residue polypeptide: Adenylyltransferase and sulfurtransferase MOCS3 (453 aa).

Thr62 is modified (phosphothreonine). ATP is bound by residues Gly101, Asp122, 129–133, Lys146, and 190–191; these read SNFHR and DN. Zn(2+) contacts are provided by Cys231 and Cys234. The active-site Glycyl thioester intermediate; for adenylyltransferase activity is the Cys248. Residues Cys306 and Cys309 each contribute to the Zn(2+) site. The Rhodanese domain occupies 355–451; it reads QAQPHLLIDV…WTNSVDPSFP (97 aa). Residue Cys410 is the Cysteine persulfide intermediate; for sulfurtransferase activity of the active site.

It in the N-terminal section; belongs to the HesA/MoeB/ThiF family. UBA4 subfamily. Zn(2+) serves as cofactor.

The protein resides in the cytoplasm. It localises to the cytosol. It catalyses the reaction [molybdopterin-synthase sulfur-carrier protein]-C-terminal Gly-Gly + ATP + H(+) = [molybdopterin-synthase sulfur-carrier protein]-C-terminal Gly-Gly-AMP + diphosphate. It carries out the reaction [molybdopterin-synthase sulfur-carrier protein]-C-terminal Gly-Gly-AMP + S-sulfanyl-L-cysteinyl-[cysteine desulfurase] + AH2 = [molybdopterin-synthase sulfur-carrier protein]-C-terminal-Gly-aminoethanethioate + L-cysteinyl-[cysteine desulfurase] + A + AMP + 2 H(+). It functions in the pathway tRNA modification; 5-methoxycarbonylmethyl-2-thiouridine-tRNA biosynthesis. Its pathway is cofactor biosynthesis; molybdopterin biosynthesis. Plays a central role in 2-thiolation of mcm(5)S(2)U at tRNA wobble positions of cytosolic tRNA(Lys), tRNA(Glu) and tRNA(Gln). Also essential during biosynthesis of the molybdenum cofactor. Acts by mediating the C-terminal thiocarboxylation of sulfur carriers URM1 and MOCS2A. Its N-terminus first activates URM1 and MOCS2A as acyl-adenylates (-COAMP), then the persulfide sulfur on the catalytic cysteine is transferred to URM1 and MOCS2A to form thiocarboxylation (-COSH) of their C-terminus. The reaction probably involves hydrogen sulfide that is generated from the persulfide intermediate and that acts as a nucleophile towards URM1 and MOCS2A. Subsequently, a transient disulfide bond is formed. Does not use thiosulfate as sulfur donor; NFS1 probably acting as a sulfur donor for thiocarboxylation reactions. This chain is Adenylyltransferase and sulfurtransferase MOCS3, found in Drosophila yakuba (Fruit fly).